Consider the following 180-residue polypeptide: Large ribosomal subunit protein uL6 (180 aa).

It belongs to the universal ribosomal protein uL6 family. Part of the 50S ribosomal subunit.

Its function is as follows. This protein binds to the 23S rRNA, and is important in its secondary structure. It is located near the subunit interface in the base of the L7/L12 stalk, and near the tRNA binding site of the peptidyltransferase center. This chain is Large ribosomal subunit protein uL6, found in Borrelia hermsii (strain HS1 / DAH).